The chain runs to 552 residues: Probable ABC transporter ATP-binding/permease protein HI_0664 (552 aa).

The next 6 helical transmembrane spans lie at Ile22–Val42, Leu52–Val72, Ile139–Leu159, Trp162–Thr182, Glu253–Leu273, and Phe278–Leu298. The ABC transmembrane type-1 domain occupies Met23–Gln307. The ABC transporter domain maps to Ile340–Ser552. Gly372–Ser379 provides a ligand contact to ATP.

It belongs to the ABC transporter superfamily. Lipid exporter (TC 3.A.1.106) family.

It is found in the cell inner membrane. The chain is Probable ABC transporter ATP-binding/permease protein HI_0664 from Haemophilus influenzae (strain ATCC 51907 / DSM 11121 / KW20 / Rd).